The following is a 545-amino-acid chain: Cytochrome P450 monooxygenase 212 (545 aa).

Positions 1 to 14 are cleaved as a signal peptide; the sequence is MAAYAWLYCALALG. Position 486 (cysteine 486) interacts with heme.

The protein belongs to the cytochrome P450 family. Heme is required as a cofactor.

It functions in the pathway secondary metabolite biosynthesis. Functionally, cytochrome P450 monooxygenase that is able to use anthracene and pyrene as substrates for oxidation. In Postia placenta (strain ATCC 44394 / Madison 698-R) (Brown rot fungus), this protein is Cytochrome P450 monooxygenase 212.